A 342-amino-acid polypeptide reads, in one-letter code: MSLRTTPRSPAEPGHLPVMLAEVLTALAPADGEVIVDGTFGGGGYTTAILKAANCTVLGIDRDLDAIVRAEKMAQANPRLVPLLGCFGDLDTLAEQAGHASVDGVVLDIGVSSFQIDQADRGFSFMKDGPLDMRMGGSGPSAADVVNTMSEKGLADVIFRLGEEKNSRRIARVLVQRRVQAPFETTADLAAVVEEAVGGRRGARSHPATLTFQAIRMYVNDELGELARGLRAAERILKPGGRLVVVTFHSLEDRLVKQWLRERAGAVPGGSRHMPLMSKGPAPAFELQENKAVQPSEKEVETNPRARSAKLRAAIRTNADAALDEASDGMNLPPLAELEKSR.

Residues 43 to 45 (GGY), Asp-61, Phe-87, Asp-108, and Gln-115 contribute to the S-adenosyl-L-methionine site. Residues 322–342 (ALDEASDGMNLPPLAELEKSR) are disordered.

The protein belongs to the methyltransferase superfamily. RsmH family.

It is found in the cytoplasm. It catalyses the reaction cytidine(1402) in 16S rRNA + S-adenosyl-L-methionine = N(4)-methylcytidine(1402) in 16S rRNA + S-adenosyl-L-homocysteine + H(+). In terms of biological role, specifically methylates the N4 position of cytidine in position 1402 (C1402) of 16S rRNA. This Hyphomonas neptunium (strain ATCC 15444) protein is Ribosomal RNA small subunit methyltransferase H.